Reading from the N-terminus, the 367-residue chain is Heparan sulfate glucosamine 3-O-sulfotransferase 2 (367 aa).

The Cytoplasmic segment spans residues 1–19 (MAYRVLGRAGPPQPRRARR). Residues 20–39 (LLFAFTLSLSCTYLCYSFLC) traverse the membrane as a helical; Signal-anchor for type II membrane protein segment. At 40–367 (CCDDLGRSRL…ETVGQDFRWE (328 aa)) the chain is on the lumenal side. Residues 61–110 (AGGQKLLQKSRPCDPSGPTPSEPSAPSAPAAAVPAPRLSGSNHSGSPKLG) form a disordered region. A compositionally biased stretch (low complexity) spans 84–96 (SAPSAPAAAVPAP). Asn-102 is a glycosylation site (N-linked (GlcNAc...) asparagine). Position 124–128 (124–128 (KGGTR)) interacts with 3'-phosphoadenylyl sulfate. Residues 146–152 (EPHFFDR) and 177–180 (KTPS) contribute to the substrate site. The N-linked (GlcNAc...) asparagine glycan is linked to Asn-193. Arg-205 and Ser-213 together coordinate 3'-phosphoadenylyl sulfate. Asn-235 is a glycosylation site (N-linked (GlcNAc...) asparagine). A substrate-binding site is contributed by 245-246 (WN). Asn-306 carries an N-linked (GlcNAc...) asparagine glycan. An intrachain disulfide couples Cys-313 to Cys-325. 330 to 334 (KGRTH) contacts 3'-phosphoadenylyl sulfate.

The protein belongs to the sulfotransferase 1 family. In terms of tissue distribution, highly expressed in the brain and weakly expressed in the heart, placenta, lung and skeletal muscle.

It is found in the golgi apparatus membrane. It carries out the reaction alpha-D-glucosaminyl-[heparan sulfate](n) + 3'-phosphoadenylyl sulfate = 3-sulfo-alpha-D-glucosaminyl-[heparan sulfate](n) + adenosine 3',5'-bisphosphate + H(+). Functionally, sulfotransferase that utilizes 3'-phospho-5'-adenylyl sulfate (PAPS) to catalyze the transfer of a sulfo group to an N-unsubstituted glucosamine linked to a 2-O-sulfo iduronic acid unit on heparan sulfate. Catalyzes the O-sulfation of glucosamine in GlcA2S-GlcNS. Unlike HS3ST1/3-OST-1, does not convert non-anticoagulant heparan sulfate to anticoagulant heparan sulfate. This chain is Heparan sulfate glucosamine 3-O-sulfotransferase 2 (HS3ST2), found in Homo sapiens (Human).